A 198-amino-acid chain; its full sequence is tRNA (pseudouridine(54)-N(1))-methyltransferase (198 aa).

S-adenosyl-L-methionine-binding positions include L130, G153, 176 to 181 (LSPLEL), and C186.

It belongs to the methyltransferase superfamily. TrmY family. Homodimer.

The protein localises to the cytoplasm. The enzyme catalyses pseudouridine(54) in tRNA + S-adenosyl-L-methionine = N(1)-methylpseudouridine(54) in tRNA + S-adenosyl-L-homocysteine + H(+). Functionally, specifically catalyzes the N1-methylation of pseudouridine at position 54 (Psi54) in tRNAs. This is tRNA (pseudouridine(54)-N(1))-methyltransferase from Methanococcus maripaludis (strain C5 / ATCC BAA-1333).